The sequence spans 349 residues: Guanine nucleotide-binding protein alpha-13 subunit (349 aa).

Gly2 is lipidated: N-myristoyl glycine. Residue Cys3 is the site of S-palmitoyl cysteine attachment. Residues 35 to 349 (SHIRLLLLGS…VFKDIMKRKR (315 aa)) enclose the G-alpha domain. The segment at 38–51 (RLLLLGSAESGKTT) is G1 motif. GTP-binding positions include 43–50 (GSAESGKT), 177–183 (IMAYVPT), 202–206 (DIGGQ), 271–274 (NEID), and Ala327. The interval 175–183 (DLIMAYVPT) is G2 motif. Thr183 provides a ligand contact to Mg(2+). A G3 motif region spans residues 198 to 207 (FQLFDIGGQK). Positions 267–274 (YLFLNEID) are G4 motif. Positions 325–330 (CIAIDT) are G5 motif.

This sequence belongs to the G-alpha family. In terms of assembly, g proteins are composed of 3 units; alpha, beta and gamma. The alpha chain contains the guanine nucleotide binding site.

In terms of biological role, guanine nucleotide-binding proteins (G proteins) are involved as modulators or transducers in various transmembrane signaling systems. This Caenorhabditis briggsae protein is Guanine nucleotide-binding protein alpha-13 subunit.